The following is a 97-amino-acid chain: Thiosulfate sulfurtransferase/rhodanese-like domain-containing protein 3 (97 aa).

The Rhodanese domain occupies 32 to 84 (YKELKNLLNSKNIMLIDVREIWEILEYQKIPESINVPLDEVGEALQMNPRDFK). Lys-84 carries the N6-succinyllysine modification.

The sequence is that of Thiosulfate sulfurtransferase/rhodanese-like domain-containing protein 3 (TSTD3) from Homo sapiens (Human).